The sequence spans 572 residues: Methionine--tRNA ligase (572 aa).

Positions 11–21 match the 'HIGH' region motif; the sequence is PYINGIKHLGN. Cysteine 143, cysteine 146, cysteine 156, and cysteine 159 together coordinate Zn(2+). Positions 346-350 match the 'KMSKS' region motif; the sequence is QFSTS. Threonine 349 contacts ATP.

Belongs to the class-I aminoacyl-tRNA synthetase family. MetG type 1 subfamily. Monomer. Requires Zn(2+) as cofactor.

Its subcellular location is the cytoplasm. It catalyses the reaction tRNA(Met) + L-methionine + ATP = L-methionyl-tRNA(Met) + AMP + diphosphate. Its function is as follows. Is required not only for elongation of protein synthesis but also for the initiation of all mRNA translation through initiator tRNA(fMet) aminoacylation. The chain is Methionine--tRNA ligase from Dinoroseobacter shibae (strain DSM 16493 / NCIMB 14021 / DFL 12).